Consider the following 335-residue polypeptide: Tetraacyldisaccharide 4'-kinase (335 aa).

58 to 65 (TVGGSGKT) contributes to the ATP binding site.

The protein belongs to the LpxK family.

The catalysed reaction is a lipid A disaccharide + ATP = a lipid IVA + ADP + H(+). Its pathway is glycolipid biosynthesis; lipid IV(A) biosynthesis; lipid IV(A) from (3R)-3-hydroxytetradecanoyl-[acyl-carrier-protein] and UDP-N-acetyl-alpha-D-glucosamine: step 6/6. Its function is as follows. Transfers the gamma-phosphate of ATP to the 4'-position of a tetraacyldisaccharide 1-phosphate intermediate (termed DS-1-P) to form tetraacyldisaccharide 1,4'-bis-phosphate (lipid IVA). This Shewanella sp. (strain ANA-3) protein is Tetraacyldisaccharide 4'-kinase.